Here is a 504-residue protein sequence, read N- to C-terminus: MSVMLETSLGDLIIDLEVDKCPRTCENFIKLCKLKYYALNAFFNVSKNFIAQSGDPTATGTGGESLASYVYSQSPSGPRPPRYFTPEILNSLKHTHKGTLSMAVAPINPPGCGSQFFITLADNIDYLDGKHAVFGHVIEGLDTLDKINDAFTDKEGRPLQNIRIRHVEILEDPFPDPDNFMPIPQSPIRPPDDLSKVRIADTEDPNAVIPEEEAEELRRRTEAASSALTLEMIGDLPFAAVRPPENILFVCKLNPVTQDEDLELIFSRFGKILSCEVVRDKKSGDSLQYAFIEFDEREAAEQAYFKMQNVLVDDRRIWVDFSQSVAKMNRSMLSSSNPTGRGGRGGRGGRGGNYSGRRDGDRDRDRDSGWSSRRDAPDSRRPPPPPVPMSSSRDVGGTEGYGLVFDDRSAPSSRGSKRDRERSPKRERDRERERDRSPRRDRDRERDRSPRRDRDRERDDHDRRDRDRNGRDRERNGDRERYRERSRERENERYRERDDRDRRR.

Residues 1-169 form the PPIase cyclophilin-type domain; sequence MSVMLETSLG…QNIRIRHVEI (169 aa). The RRM domain maps to 246–324; the sequence is NILFVCKLNP…RRIWVDFSQS (79 aa). A compositionally biased stretch (polar residues) spans 330–339; the sequence is RSMLSSSNPT. The interval 330–504 is disordered; that stretch reads RSMLSSSNPT…RERDDRDRRR (175 aa). Gly residues predominate over residues 340–354; the sequence is GRGGRGGRGGRGGNY. 2 stretches are compositionally biased toward basic and acidic residues: residues 356–381 and 416–504; these read GRRDGDRDRDRDSGWSSRRDAPDSRR and SKRD…DRRR.

Belongs to the cyclophilin-type PPIase family. PPIL4 subfamily.

It is found in the nucleus. The catalysed reaction is [protein]-peptidylproline (omega=180) = [protein]-peptidylproline (omega=0). Functionally, PPIases accelerate the folding of proteins. It catalyzes the cis-trans isomerization of proline imidic peptide bonds in oligopeptides. This chain is Peptidyl-prolyl cis-trans isomerase-like 4 (CYP6), found in Cryptococcus neoformans var. neoformans serotype D (strain B-3501A) (Filobasidiella neoformans).